Here is a 78-residue protein sequence, read N- to C-terminus: Small ribosomal subunit protein bS16c (78 aa).

It belongs to the bacterial ribosomal protein bS16 family.

It is found in the plastid. Its subcellular location is the chloroplast. The polypeptide is Small ribosomal subunit protein bS16c (Daucus carota (Wild carrot)).